Consider the following 187-residue polypeptide: Large ribosomal subunit protein uL22 (187 aa).

Positions 159 to 171 (VSKPTDDAAPKVK) are enriched in basic and acidic residues. Residues 159–187 (VSKPTDDAAPKVKKESKRKQRRQLARGEF) form a disordered region. A compositionally biased stretch (basic residues) spans 172 to 187 (KESKRKQRRQLARGEF).

It belongs to the universal ribosomal protein uL22 family.

The polypeptide is Large ribosomal subunit protein uL22 (rpl-17) (Caenorhabditis elegans).